The chain runs to 251 residues: Triosephosphate isomerase (251 aa).

9–11 (NWK) provides a ligand contact to substrate. Residue His95 is the Electrophile of the active site. The Proton acceptor role is filled by Glu167. Residues Gly173, Ser213, and 234–235 (GG) contribute to the substrate site. Residue Ser213 is modified to Phosphoserine.

This sequence belongs to the triosephosphate isomerase family. Homodimer.

The protein localises to the cytoplasm. The catalysed reaction is D-glyceraldehyde 3-phosphate = dihydroxyacetone phosphate. Its pathway is carbohydrate biosynthesis; gluconeogenesis. The protein operates within carbohydrate degradation; glycolysis; D-glyceraldehyde 3-phosphate from glycerone phosphate: step 1/1. Functionally, involved in the gluconeogenesis. Catalyzes stereospecifically the conversion of dihydroxyacetone phosphate (DHAP) to D-glyceraldehyde-3-phosphate (G3P). The polypeptide is Triosephosphate isomerase (Bacillus cereus (strain AH820)).